We begin with the raw amino-acid sequence, 140 residues long: Cytochrome c oxidase subunit 6, mitochondrial (140 aa).

It belongs to the cytochrome c oxidase subunit 5A family. Component of the cytochrome c oxidase (complex IV, CIV), a multisubunit enzyme composed of a catalytic core of 3 subunits and several supernumerary subunits. The complex exists as a monomer or a dimer and forms supercomplexes (SCs) in the inner mitochondrial membrane with ubiquinol-cytochrome c oxidoreductase (cytochrome b-c1 complex, complex III, CIII).

The protein localises to the mitochondrion inner membrane. It functions in the pathway energy metabolism; oxidative phosphorylation. Component of the cytochrome c oxidase, the last enzyme in the mitochondrial electron transport chain which drives oxidative phosphorylation. The respiratory chain contains 3 multisubunit complexes succinate dehydrogenase (complex II, CII), ubiquinol-cytochrome c oxidoreductase (cytochrome b-c1 complex, complex III, CIII) and cytochrome c oxidase (complex IV, CIV), that cooperate to transfer electrons derived from NADH and succinate to molecular oxygen, creating an electrochemical gradient over the inner membrane that drives transmembrane transport and the ATP synthase. Cytochrome c oxidase is the component of the respiratory chain that catalyzes the reduction of oxygen to water. Electrons originating from reduced cytochrome c in the intermembrane space (IMS) are transferred via the dinuclear copper A center (CU(A)) of subunit 2 and heme A of subunit 1 to the active site in subunit 1, a binuclear center (BNC) formed by heme A3 and copper B (CU(B)). The BNC reduces molecular oxygen to 2 water molecules using 4 electrons from cytochrome c in the IMS and 4 protons from the mitochondrial matrix. The sequence is that of Cytochrome c oxidase subunit 6, mitochondrial (cox6) from Schizosaccharomyces pombe (strain 972 / ATCC 24843) (Fission yeast).